The sequence spans 294 residues: Cytidine deaminase (294 aa).

CMP/dCMP-type deaminase domains lie at 48–168 (DEDA…FGPK) and 186–294 (VSGD…VLLG). Residue 89–91 (NME) participates in substrate binding. Residue His-102 coordinates Zn(2+). The active-site Proton donor is Glu-104. The Zn(2+) site is built by Cys-129 and Cys-132.

It belongs to the cytidine and deoxycytidylate deaminase family. As to quaternary structure, homodimer. The cofactor is Zn(2+).

It carries out the reaction cytidine + H2O + H(+) = uridine + NH4(+). The enzyme catalyses 2'-deoxycytidine + H2O + H(+) = 2'-deoxyuridine + NH4(+). Its function is as follows. This enzyme scavenges exogenous and endogenous cytidine and 2'-deoxycytidine for UMP synthesis. The polypeptide is Cytidine deaminase (Klebsiella pneumoniae (strain 342)).